The sequence spans 145 residues: MNAYDAYMKEIAQQMRGELTQNGFTSLETSEEVSEYMNQVNADDTTFVVINSTCGCAAGLARPAAVAVATQNEHRPTNTVTVFAGQDKEATATMREFIQQVPSSPSYALFKGRDLVYFMPREFIEGRDINDIAMDLKDAFDENCK.

It belongs to the bacilliredoxin family.

This is Bacilliredoxin SAR1441 from Staphylococcus aureus (strain MRSA252).